The chain runs to 259 residues: Dolichol-phosphate mannosyltransferase subunit 1 (259 aa).

The residue at position 2 (Ala2) is an N-acetylalanine. Position 3 is a phosphoserine (Ser3). Residues Pro31, Tyr33, Glu35, Ile62, Asp64, Asp117, Ala118, Asp119, Arg146, Arg233, and Lys239 each coordinate GDP-alpha-D-mannose. Residue Asp119 coordinates Mg(2+). Asp119 provides a ligand contact to Mn(2+).

Belongs to the glycosyltransferase 2 family. In terms of assembly, component of the dolichol-phosphate mannose (DPM) synthase complex composed of DPM1, DPM2 and DPM3; within the complex, directly interacts with DPM3. This interaction may stabilize DPM1. Mg(2+) serves as cofactor. It depends on Mn(2+) as a cofactor. Requires Ca(2+) as cofactor.

It is found in the endoplasmic reticulum. It carries out the reaction a di-trans,poly-cis-dolichyl phosphate + GDP-alpha-D-mannose = a di-trans,poly-cis-dolichyl beta-D-mannosyl phosphate + GDP. It participates in protein modification; protein glycosylation. In terms of biological role, transfers mannose from GDP-mannose to dolichol monophosphate to form dolichol phosphate mannose (Dol-P-Man) which is the mannosyl donor in pathways leading to N-glycosylation, glycosyl phosphatidylinositol membrane anchoring, and O-mannosylation of proteins; catalytic subunit of the dolichol-phosphate mannose (DPM) synthase complex. This Sus scrofa (Pig) protein is Dolichol-phosphate mannosyltransferase subunit 1 (DPM1).